We begin with the raw amino-acid sequence, 141 residues long: LOB domain-containing protein 34 (141 aa).

The LOB domain occupies 16–119 (NQCAACRHQR…SPLNYVAPVI (104 aa)).

Belongs to the LOB domain-containing protein family.

The chain is LOB domain-containing protein 34 (LBD34) from Arabidopsis thaliana (Mouse-ear cress).